Reading from the N-terminus, the 471-residue chain is Glutamate--tRNA ligase (471 aa).

The 'HIGH' region signature appears at 9-19 (PSPTGFLHVGG). C98, C100, C125, and D127 together coordinate Zn(2+). Residues 237–241 (KLSKR) carry the 'KMSKS' region motif. ATP is bound at residue K240.

This sequence belongs to the class-I aminoacyl-tRNA synthetase family. Glutamate--tRNA ligase type 1 subfamily. In terms of assembly, monomer. Zn(2+) is required as a cofactor.

The protein localises to the cytoplasm. It carries out the reaction tRNA(Glu) + L-glutamate + ATP = L-glutamyl-tRNA(Glu) + AMP + diphosphate. Catalyzes the attachment of glutamate to tRNA(Glu) in a two-step reaction: glutamate is first activated by ATP to form Glu-AMP and then transferred to the acceptor end of tRNA(Glu). This is Glutamate--tRNA ligase from Aeromonas salmonicida (strain A449).